The sequence spans 186 residues: UPF0301 protein PM1869 (186 aa).

This sequence belongs to the UPF0301 (AlgH) family.

The sequence is that of UPF0301 protein PM1869 from Pasteurella multocida (strain Pm70).